The primary structure comprises 95 residues: UPF0358 protein BcerKBAB4_3775 (95 aa).

It belongs to the UPF0358 family.

The polypeptide is UPF0358 protein BcerKBAB4_3775 (Bacillus mycoides (strain KBAB4) (Bacillus weihenstephanensis)).